Here is a 298-residue protein sequence, read N- to C-terminus: Probable protein phosphatase 2C 26 (298 aa).

Positions 48-295 constitute a PPM-type phosphatase domain; the sequence is SVGIHAIPHP…DDVTVIVAKV (248 aa). The Mn(2+) site is built by Asp-82, Gly-83, Asp-213, and Asp-286.

The protein belongs to the PP2C family. Mg(2+) serves as cofactor. The cofactor is Mn(2+).

The enzyme catalyses O-phospho-L-seryl-[protein] + H2O = L-seryl-[protein] + phosphate. It catalyses the reaction O-phospho-L-threonyl-[protein] + H2O = L-threonyl-[protein] + phosphate. The polypeptide is Probable protein phosphatase 2C 26 (Arabidopsis thaliana (Mouse-ear cress)).